Reading from the N-terminus, the 145-residue chain is Ecdysteroid-regulated 16 kDa protein (145 aa).

An N-terminal signal peptide occupies residues 1–16 (MLFYITVTVLLVSAQA). 2 cysteine pairs are disulfide-bonded: Cys22–Cys137 and Cys90–Cys97. The N-linked (GlcNAc...) asparagine glycan is linked to Asn51.

Belongs to the NPC2 family.

It localises to the secreted. In Manduca sexta (Tobacco hawkmoth), this protein is Ecdysteroid-regulated 16 kDa protein (ESR16).